A 627-amino-acid chain; its full sequence is Chaperone protein DnaK (627 aa).

Threonine 197 carries the phosphothreonine; by autocatalysis modification. Positions 596–615 are enriched in low complexity; that stretch reads MYAQGGDQGQQAAPQQEQSG. The disordered stretch occupies residues 596–627; the sequence is MYAQGGDQGQQAAPQQEQSGDNVEDVEFEEVK. The span at 617–627 shows a compositional bias: acidic residues; it reads NVEDVEFEEVK.

This sequence belongs to the heat shock protein 70 family.

In terms of biological role, acts as a chaperone. The protein is Chaperone protein DnaK of Flavobacterium johnsoniae (strain ATCC 17061 / DSM 2064 / JCM 8514 / BCRC 14874 / CCUG 350202 / NBRC 14942 / NCIMB 11054 / UW101) (Cytophaga johnsonae).